Reading from the N-terminus, the 319-residue chain is 8-methylmenaquinol:fumarate reductase iron-sulfur subunit (319 aa).

Positions 1–96 (MKFIIDRFDG…TFRISPLGNH (96 aa)) constitute a 2Fe-2S ferredoxin-type domain. [2Fe-2S] cluster is bound by residues Cys-51, Cys-56, Cys-59, and Cys-71. 2 4Fe-4S ferredoxin-type domains span residues 139 to 168 (FDRIIKQWDCILCGSCVSECNKFSADQSDY) and 193 to 224 (VKPAVANGLWNCVHCHECTNRCPKHISAAEDI). Positions 148, 151, 154, 158, 204, 207, 210, and 214 each coordinate [4Fe-4S] cluster.

Belongs to the succinate dehydrogenase/fumarate reductase iron-sulfur protein family. The MFR complex is composed of three subunits: a flavoprotein (SdhA), an iron-sulfur protein (SdhB), and one hydrophobic anchor protein (SdhE). [2Fe-2S] cluster serves as cofactor. It depends on [4Fe-4S] cluster as a cofactor.

It localises to the periplasm. It is found in the cell membrane. The enzyme catalyses 8-methylmenaquinone-6 + succinate = 8-methylmenaquinol-6 + fumarate. Iron-sulfur subunit of 8-methylmenaquinol:fumarate reductase (MFR), that catalyzes the reduction of fumarate using 8-methylmenaquinol-6 as electron donor. The complex shows no succinate oxidation activity. Is involved in anaerobic metabolism. The chain is 8-methylmenaquinol:fumarate reductase iron-sulfur subunit from Wolinella succinogenes (strain ATCC 29543 / DSM 1740 / CCUG 13145 / JCM 31913 / LMG 7466 / NCTC 11488 / FDC 602W) (Vibrio succinogenes).